The primary structure comprises 322 residues: Ribose-phosphate pyrophosphokinase 1 (322 aa).

Residues Asp-39–Glu-41 and Arg-98–Gln-99 each bind ATP. Positions 132 and 173 each coordinate Mg(2+). The active site involves Lys-196. Residues Arg-198, Asp-224, and Asp-228–Thr-232 each bind D-ribose 5-phosphate.

It belongs to the ribose-phosphate pyrophosphokinase family. Class I subfamily. As to quaternary structure, homohexamer. Requires Mg(2+) as cofactor.

It localises to the cytoplasm. It carries out the reaction D-ribose 5-phosphate + ATP = 5-phospho-alpha-D-ribose 1-diphosphate + AMP + H(+). It participates in metabolic intermediate biosynthesis; 5-phospho-alpha-D-ribose 1-diphosphate biosynthesis; 5-phospho-alpha-D-ribose 1-diphosphate from D-ribose 5-phosphate (route I): step 1/1. Involved in the biosynthesis of the central metabolite phospho-alpha-D-ribosyl-1-pyrophosphate (PRPP) via the transfer of pyrophosphoryl group from ATP to 1-hydroxyl of ribose-5-phosphate (Rib-5-P). This chain is Ribose-phosphate pyrophosphokinase 1, found in Streptococcus agalactiae serotype III (strain NEM316).